The chain runs to 203 residues: Glycerol-3-phosphate acyltransferase (203 aa).

5 helical membrane-spanning segments follow: residues 10-30 (MLIL…GLIL), 59-79 (GAAA…VLLA), 87-107 (AAQV…WLGF), 116-136 (FLGL…LSWL), and 160-180 (LVLL…LMVF).

This sequence belongs to the PlsY family. As to quaternary structure, probably interacts with PlsX.

It localises to the cell inner membrane. It catalyses the reaction an acyl phosphate + sn-glycerol 3-phosphate = a 1-acyl-sn-glycero-3-phosphate + phosphate. It functions in the pathway lipid metabolism; phospholipid metabolism. In terms of biological role, catalyzes the transfer of an acyl group from acyl-phosphate (acyl-PO(4)) to glycerol-3-phosphate (G3P) to form lysophosphatidic acid (LPA). This enzyme utilizes acyl-phosphate as fatty acyl donor, but not acyl-CoA or acyl-ACP. This chain is Glycerol-3-phosphate acyltransferase, found in Ruegeria pomeroyi (strain ATCC 700808 / DSM 15171 / DSS-3) (Silicibacter pomeroyi).